Consider the following 561-residue polypeptide: Carbohydrate sulfotransferase 15 (561 aa).

The Cytoplasmic portion of the chain corresponds to 1-80 (MRHCINCCVQ…FLRFRKGKRC (80 aa)). Residues 81–101 (SLVFGLIIMTLVMASYILSGA) traverse the membrane as a helical; Signal-anchor for type II membrane protein segment. Topologically, residues 102–561 (HQELLISSPF…DDEAFAWKTT (460 aa)) are lumenal. 263-267 (KCGTT) provides a ligand contact to 3'-phosphoadenylyl sulfate. The N-linked (GlcNAc...) asparagine glycan is linked to asparagine 364. Arginine 392 and serine 400 together coordinate 3'-phosphoadenylyl sulfate.

Belongs to the sulfotransferase 1 family. As to quaternary structure, homodimer; disulfide-linked (Potential). The relevance of homodimerization is however unsure. May interact with phosphorylated proteins in resting B-cells, including HCK. A divalent metal cation is required as a cofactor. Requires glutathione as cofactor. In terms of processing, glycosylated.

It localises to the golgi apparatus membrane. The enzyme catalyses dermatan 4'-sulfate + n 3'-phosphoadenylyl sulfate = dermatan 4',6'-bissulfate + n adenosine 3',5'-bisphosphate + n H(+). It carries out the reaction chondroitin 4'-sulfate + n 3'-phosphoadenylyl sulfate = chondroitin 4',6'-bissulfate + n adenosine 3',5'-bisphosphate + n H(+). Its activity is regulated as follows. Inhibited by phenyl beta-GalNAc(4,6-SO(4)). Its function is as follows. Sulfotransferase that transfers sulfate from 3'-phosphoadenosine 5'-phosphosulfate (PAPS) to the C-6 hydroxyl group of the GalNAc 4-sulfate residue of chondroitin sulfate A and forms chondroitin sulfate E containing GlcA-GalNAc(4,6-SO(4)) repeating units. It also transfers sulfate to a unique non-reducing terminal sequence, GalNAc(4SO4)-GlcA(2SO4)-GalNAc(6SO4), to yield a highly sulfated structure similar to the structure found in thrombomodulin chondroitin sulfate. May also act as a B-cell receptor involved in BCR ligation-mediated early activation that mediate regulatory signals key to B-cell development and/or regulation of B-cell-specific RAG expression; however such results are unclear in vivo. The chain is Carbohydrate sulfotransferase 15 (Chst15) from Mus musculus (Mouse).